Reading from the N-terminus, the 113-residue chain is Dolichyl-diphosphooligosaccharide--protein glycosyltransferase subunit dad1 (113 aa).

The Cytoplasmic segment spans residues 1–30; that stretch reads MSVSVFSVVSRFLDEYVSSTPQRLKLLDAY. Residues 31–51 form a helical membrane-spanning segment; the sequence is LLYILLTGALQFLYCLLVGTF. Position 52 (Pro52) is a topological domain, lumenal. Residues 53 to 73 traverse the membrane as a helical segment; it reads FNSFLSGFISSVGSFILAVCL. Topologically, residues 74-92 are cytoplasmic; it reads RIQINPQNKSDFQGISPER. Residues 93-113 form a helical membrane-spanning segment; the sequence is AFADFLFANTILHLVVVNFIG.

Belongs to the DAD/OST2 family. In terms of assembly, component of the oligosaccharyltransferase (OST) complex.

It is found in the endoplasmic reticulum membrane. It participates in protein modification; protein glycosylation. Functionally, subunit of the oligosaccharyl transferase (OST) complex that catalyzes the initial transfer of a defined glycan (Glc(3)Man(9)GlcNAc(2) in eukaryotes) from the lipid carrier dolichol-pyrophosphate to an asparagine residue within an Asn-X-Ser/Thr consensus motif in nascent polypeptide chains, the first step in protein N-glycosylation. N-glycosylation occurs cotranslationally and the complex associates with the Sec61 complex at the channel-forming translocon complex that mediates protein translocation across the endoplasmic reticulum (ER). All subunits are required for a maximal enzyme activity. This is Dolichyl-diphosphooligosaccharide--protein glycosyltransferase subunit dad1 from Xenopus laevis (African clawed frog).